The chain runs to 107 residues: UPF0145 protein LVIS_1527 (107 aa).

The protein belongs to the UPF0145 family.

The chain is UPF0145 protein LVIS_1527 from Levilactobacillus brevis (strain ATCC 367 / BCRC 12310 / CIP 105137 / JCM 1170 / LMG 11437 / NCIMB 947 / NCTC 947) (Lactobacillus brevis).